Consider the following 179-residue polypeptide: Large ribosomal subunit protein uL6 (179 aa).

This sequence belongs to the universal ribosomal protein uL6 family. Part of the 50S ribosomal subunit.

Its function is as follows. This protein binds to the 23S rRNA, and is important in its secondary structure. It is located near the subunit interface in the base of the L7/L12 stalk, and near the tRNA binding site of the peptidyltransferase center. The protein is Large ribosomal subunit protein uL6 of Methylacidiphilum infernorum (isolate V4) (Methylokorus infernorum (strain V4)).